Reading from the N-terminus, the 245-residue chain is Glutathione S-transferase T1 (245 aa).

The GST N-terminal domain occupies Met-2–Ala-83. Glutathione-binding positions include Ser-12–Gln-13, Gln-41–Leu-42, Lys-54–Val-55, and Glu-67–Ser-68. In terms of domain architecture, GST C-terminal spans Asp-90–Met-233. Positions Ser-243 to Ile-245 match the Microbody targeting signal motif.

It belongs to the GST superfamily. Theta family.

The protein localises to the nucleus. The protein resides in the peroxisome. The catalysed reaction is RX + glutathione = an S-substituted glutathione + a halide anion + H(+). In vitro, possesses glutathione S-transferase activity toward 1-chloro-2,4-dinitrobenzene (CDNB) and p-nitrobenzyl chloride (pNBC), and glutathione peroxidase activity toward cumene hydroperoxide and linoleic acid-13-hydroperoxide. May be involved in the conjugation of reduced glutathione to a wide number of exogenous and endogenous hydrophobic electrophiles and have a detoxification role against certain herbicides. The chain is Glutathione S-transferase T1 (GSTT1) from Arabidopsis thaliana (Mouse-ear cress).